The sequence spans 420 residues: Gamma-glutamyl phosphate reductase (420 aa).

This sequence belongs to the gamma-glutamyl phosphate reductase family.

It localises to the cytoplasm. It catalyses the reaction L-glutamate 5-semialdehyde + phosphate + NADP(+) = L-glutamyl 5-phosphate + NADPH + H(+). The protein operates within amino-acid biosynthesis; L-proline biosynthesis; L-glutamate 5-semialdehyde from L-glutamate: step 2/2. In terms of biological role, catalyzes the NADPH-dependent reduction of L-glutamate 5-phosphate into L-glutamate 5-semialdehyde and phosphate. The product spontaneously undergoes cyclization to form 1-pyrroline-5-carboxylate. The polypeptide is Gamma-glutamyl phosphate reductase (Streptococcus sanguinis (strain SK36)).